The following is a 177-amino-acid chain: Large ribosomal subunit protein uL6 (177 aa).

It belongs to the universal ribosomal protein uL6 family. As to quaternary structure, part of the 50S ribosomal subunit.

This protein binds to the 23S rRNA, and is important in its secondary structure. It is located near the subunit interface in the base of the L7/L12 stalk, and near the tRNA binding site of the peptidyltransferase center. The sequence is that of Large ribosomal subunit protein uL6 from Rhizobium johnstonii (strain DSM 114642 / LMG 32736 / 3841) (Rhizobium leguminosarum bv. viciae).